A 1034-amino-acid polypeptide reads, in one-letter code: MEHERGGGGRGRGRGRGGGRGGGGGDGRGGGYGGAGGGGVGGRGGRGPPGGGGGRGYEPGGGRGYGGGGGGGGRGYGGGGGGGGYESGGGRGYGGGGRGYESGGGRGPGGGGRGHESGGGGGRGGNVWAQPGRGRGGAPAPAPAPAPAARRIQDEGAARSSGTVERIASTEVVRVQPPAPPVAVSRSGTRVPMRRPDGGGSVSKAKVKLLVNHFIVKYRQASTVFHYDIDIKLDISSPKASDKELSKGDFLTVKDELFKDESFRRLSSAVAYDGKRNLFTCAELPDGLFRVKVRSRTYIVSVEFKKKLPLSQLSELPVPREVLQGLDVIVREASSWRKIIIGQGFYSQGRSVPIGPDVVALKGTQQTLKCTQKGLILCVDYSVMPFRKAGPVLDLVQKSVRYLDYRTTLNKHQLDTLKNELKGQRVTVNHRRTKQKYIVKGLTDKPASQITFVDSESGQTKKLLDYYSQQYGKVIEYQMLPCLDLSKSKDKQNYVPIELCDLLEGQRYPKASLNRNSDKTLKEMALIPASSRKEEILELVNADDGPCRGEIAQQFGISLDVQMMEVTGRTLPPPSLKLGTSSGQPPKFNIDQPNCQWNLTRKRLAEGGVLQCWGVVDFSADSGQYALNGNMFIDKIVRKCCDLGVQMNRNPCIVQLLDMEVLSDPHQLFEELNKAKQAAASKKQKLQLLFCPMSDQHPGYKTLKLICETQLGIQTQCFLSFLANKQQGQDQYMSNLALKINGKIGGSNIQLFGESLPRISGAPYMFIGADVNHPSPGNVESPSIAAVVASVDQGASKYVPRIRAQPHRCEVIQHLGDMCKELIGVFEKRNRVKPQRIIYFRDGVSDGQFDMVLNEELADMEKAIKTKDYSPTITVIVAKKRHHTRLFPKDLNQQQTKNGNVLPGTVVDTGVVDPAAYDFYLCSHNGLIGTSRPTHYYSLLDEHGFASDDLQKLVYNLCFVFARCTKPVSLATPVYYADLAAYRGRLYYEGMMMSQPPPSSAASASSASSSGAGASDFRSFPALHEDLVDNMFFI.

The tract at residues 1 to 201 (MEHERGGGGR…PMRRPDGGGS (201 aa)) is disordered. Gly residues predominate over residues 18–125 (GGRGGGGGDG…ESGGGGGRGG (108 aa)). Positions 172-187 (VVRVQPPAPPVAVSRS) are enriched in low complexity. Residues 391–504 (PVLDLVQKSV…VPIELCDLLE (114 aa)) form the PAZ domain. One can recognise a Piwi domain in the interval 688–989 (LLFCPMSDQH…AAYRGRLYYE (302 aa)).

Belongs to the argonaute family. Ago subfamily.

Functionally, probably involved in the RNA silencing pathway. May bind to short RNAs such as microRNAs (miRNAs) or short interfering RNAs (siRNAs), and represses the translation of mRNAs which are complementary to them. The chain is Protein argonaute 2 (AGO2) from Oryza sativa subsp. japonica (Rice).